A 117-amino-acid chain; its full sequence is Hydrogenase maturation factor HypA (117 aa).

H2 serves as a coordination point for Ni(2+). Zn(2+)-binding residues include C74, C77, C91, and C94.

Belongs to the HypA/HybF family.

Its function is as follows. Involved in the maturation of [NiFe] hydrogenases. Required for nickel insertion into the metal center of the hydrogenase. The sequence is that of Hydrogenase maturation factor HypA from Helicobacter pylori (strain J99 / ATCC 700824) (Campylobacter pylori J99).